Here is a 178-residue protein sequence, read N- to C-terminus: N-alpha-acetyltransferase 20 (178 aa).

Positions 2–157 constitute an N-acetyltransferase domain; that stretch reads TSLRPFTCDD…DAYDMRKALS (156 aa). The interval 159-178 is disordered; that stretch reads DTEKKSIVPLPHPVRPEDIE.

Belongs to the acetyltransferase family. ARD1 subfamily. As to quaternary structure, component of the N-terminal acetyltransferase B (NatB) complex which is composed of naa20 and naa25.

It is found in the cytoplasm. It localises to the nucleus. It catalyses the reaction N-terminal L-methionyl-L-asparaginyl-[protein] + acetyl-CoA = N-terminal N(alpha)-acetyl-L-methionyl-L-asparaginyl-[protein] + CoA + H(+). The enzyme catalyses N-terminal L-methionyl-L-glutaminyl-[protein] + acetyl-CoA = N-terminal N(alpha)-acetyl-L-methionyl-L-glutaminyl-[protein] + CoA + H(+). It carries out the reaction N-terminal L-methionyl-L-aspartyl-[protein] + acetyl-CoA = N-terminal N(alpha)-acetyl-L-methionyl-L-aspartyl-[protein] + CoA + H(+). The catalysed reaction is N-terminal L-methionyl-L-glutamyl-[protein] + acetyl-CoA = N-terminal N(alpha)-acetyl-L-methionyl-L-glutamyl-[protein] + CoA + H(+). Its function is as follows. Catalytic subunit of the NatB complex which catalyzes acetylation of the N-terminal methionine residues of peptides beginning with Met-Asp, Met-Glu, Met-Asn and Met-Gln. Proteins with cell cycle functions are overrepresented in the pool of NatB substrates. Required for maintaining the structure and function of actomyosin fibers and for proper cellular migration. In Xenopus tropicalis (Western clawed frog), this protein is N-alpha-acetyltransferase 20 (naa20).